The sequence spans 317 residues: tRNA dimethylallyltransferase (317 aa).

13-20 (GPTASGKS) lines the ATP pocket. 15 to 20 (TASGKS) is a substrate binding site.

It belongs to the IPP transferase family. As to quaternary structure, monomer. Requires Mg(2+) as cofactor.

It catalyses the reaction adenosine(37) in tRNA + dimethylallyl diphosphate = N(6)-dimethylallyladenosine(37) in tRNA + diphosphate. Its function is as follows. Catalyzes the transfer of a dimethylallyl group onto the adenine at position 37 in tRNAs that read codons beginning with uridine, leading to the formation of N6-(dimethylallyl)adenosine (i(6)A). The protein is tRNA dimethylallyltransferase of Kineococcus radiotolerans (strain ATCC BAA-149 / DSM 14245 / SRS30216).